Here is a 339-residue protein sequence, read N- to C-terminus: Deubiquitinase and deneddylase Dub2 (339 aa).

Residues 36-56 form a helical membrane-spanning segment; sequence IIIALFLIVISCGLILCAYTF. Catalysis depends on residues His-203, Asp-220, and Cys-282.

This sequence belongs to the peptidase C48 family.

It localises to the secreted. Its subcellular location is the host cell. The protein localises to the membrane. In terms of biological role, effector proteins function to alter host cell physiology and promote bacterial survival in host tissues. This protease possesses deubiquitinating and deneddylating activities. The chain is Deubiquitinase and deneddylase Dub2 (cdu2) from Chlamydia trachomatis serovar A (strain ATCC VR-571B / DSM 19440 / HAR-13).